The sequence spans 442 residues: Protein UNUSUAL FLORAL ORGANS (442 aa).

The tract at residues 1 to 85 is interaction with SKP1A; the sequence is MDSTVFINNP…RFYSLLFSNT (85 aa). The F-box domain occupies 44 to 90; sequence GRIWSKLPPPLLDRVIAFLPPPAFFRTRCVCKRFYSLLFSNTFLETY.

In terms of assembly, part of a putative SCF (ASK/Cullin/F-box) ubiquitin ligase complex. Interacts with SKP1A/ASK1, SKP1B/ASK2 and ASK11.

It localises to the nucleus. Its pathway is protein modification; protein ubiquitination. Component of SCF(ASK-cullin-F-box) E3 ubiquitin ligase complexes, which may mediate the ubiquitination and subsequent proteasomal degradation of target proteins. Considered as a meristem identity factor required for normal growth of the young floral meristem. Acts together with LEAFY to positively regulate the B class floral homeotic genes APETALA3 and PISTILLATA. In this way, operates as a region-specific regulator for petal and stamen development. Alternatively, may play a role as a negative regulator of the C class floral homeotic genes. Interacts together with the SKP1-like protein ASK1 to form a ubiquitin E3 ligase complex and could indirectly promote the ubiquitination and degradation of specific proteins controlling the floral primordia development like repressors of B class floral homeotic genes. This is Protein UNUSUAL FLORAL ORGANS (UFO) from Arabidopsis thaliana (Mouse-ear cress).